The following is a 104-amino-acid chain: Replication restart protein PriB (104 aa).

Residues 1–101 form the SSB domain; it reads MTNRLELSGV…LHADHIEIIC (101 aa).

The protein belongs to the PriB family. In terms of assembly, homodimer. Interacts with PriA and DnaT. Component of the replication restart primosome. Primosome assembly occurs via a 'hand-off' mechanism. PriA binds to replication forks, subsequently PriB then DnaT bind; DnaT then displaces ssDNA to generate the helicase loading substrate.

Its function is as follows. Involved in the restart of stalled replication forks, which reloads the replicative helicase on sites other than the origin of replication; the PriA-PriB pathway is the major replication restart pathway. During primosome assembly it facilitates complex formation between PriA and DnaT on DNA; stabilizes PriA on DNA. Stimulates the DNA unwinding activity of PriA helicase. The chain is Replication restart protein PriB from Photobacterium profundum (strain SS9).